The chain runs to 443 residues: Fatty acid desaturase 3 (443 aa).

Over 1 to 130 the chain is Cytoplasmic; that stretch reads MGGVGEPDWE…EDMKLFEAKP (130 aa). The 78-residue stretch at 18–95 folds into the Cytochrome b5 heme-binding domain; sequence LPTLRWEQVR…LQPLLIGELA (78 aa). A helical membrane pass occupies residues 131-151; sequence AFFGLLLGHILAMEVLAWLMI. A topological domain (lumenal) is located at residue Tyr152. The helical transmembrane segment at 153–173 threads the bilayer; it reads MLGPGWVPSTLAALILAISQA. At 174–259 the chain is on the cytoplasmic side; it reads QSWCLQHDLG…KKKRRYLPYN (86 aa). Positions 180–184 match the Histidine box-1 motif; it reads HDLGH. The Histidine box-2 signature appears at 217–221; sequence HFQHH. Residues 260 to 280 traverse the membrane as a helical segment; it reads HQHLYFFLIGPPLLTLVNFEV. Over 281 to 282 the chain is Lumenal; the sequence is EN. The helical transmembrane segment at 283-303 threads the bilayer; the sequence is LAYMLVCMQWMDLLWAASFYA. Residue Arg304 is a topological domain, cytoplasmic. Residues 305–325 form a helical membrane-spanning segment; sequence FLLSYIPFYGIPGALLLFVAV. The Lumenal segment spans residues 326-443; the sequence is RVLESHWFVW…NVWLEAYLHQ (118 aa). Residues 381-385 carry the Histidine box-3 motif; it reads QIEHH.

This sequence belongs to the fatty acid desaturase type 1 family.

Its subcellular location is the endoplasmic reticulum membrane. The catalysed reaction is an N-acylsphing-4-enine + 2 Fe(II)-[cytochrome b5] + O2 + 2 H(+) = an N-acyl-sphinga-4E,14Z-dienine + 2 Fe(III)-[cytochrome b5] + 2 H2O. It carries out the reaction N-(hexanoyl)sphing-4-enine + 2 Fe(II)-[cytochrome b5] + O2 + 2 H(+) = N-hexanoyl-sphinga-4E,14Z-dienine + 2 Fe(III)-[cytochrome b5] + 2 H2O. It catalyses the reaction sphing-4-enine + 2 Fe(II)-[cytochrome b5] + O2 + 2 H(+) = sphinga-4E,14Z-dienine + 2 Fe(III)-[cytochrome b5] + 2 H2O. The enzyme catalyses (11E)-octadecenoyl-CoA + 2 Fe(II)-[cytochrome b5] + O2 + 2 H(+) = (11E,13Z)-octadecadienoyl-CoA + 2 Fe(III)-[cytochrome b5] + 2 H2O. The catalysed reaction is N-acyl-1-deoxysphinganine + 2 Fe(II)-[cytochrome b5] + O2 + 2 H(+) = N-acyl-1-deoxysphing-14Z-enine + 2 Fe(III)-[cytochrome b5] + 2 H2O. It carries out the reaction an N-acylsphinganine + 2 Fe(II)-[cytochrome b5] + O2 + 2 H(+) = an N-acylsphing-14Z-enine + 2 Fe(III)-[cytochrome b5] + 2 H2O. Its pathway is lipid metabolism; polyunsaturated fatty acid biosynthesis. The protein operates within lipid metabolism; sphingolipid metabolism. In terms of biological role, mammals have different sphingoid bases that differ in their length and/or pattern of desaturation and hydroxyl groups. The predominant sphingoid base that comprises mammalian ceramides is sphing-4-enine (sphingosine or SPH) which has a trans (E) desaturation at carbon 4. FADS3 is a desaturase that introduces a cis (Z) double bond between carbon 14 and carbon 15 of the sphingoid base (also known as long chain base, LCB), producing LCBs such as sphinga-4,14-dienine (SPD, d18:2(4E,14Z)) from SPH. Prefers SPH-containing ceramides (N-acylsphing-4-enines) as substrates. Capable of metabolizing also the SPH in its free form. SPD ceramides occur widely in mammalian tissues and cells. Due to their unusual structure containing a cis double bond, SPD ceramides may have an opposite, negative role in lipid microdomain formation relative to conventional ceramides. Could be involved in the detoxification of 1-deoxy sphingolipids, by desaturating the cytotoxic 1-deoxysphinganine (1-deoxySA, m18:0), produced under pathological conditions, to 1-deoxysphingenine (1-deoxysphingosine, 1-deoxySO, m18:1). Although prefers SPH-containing ceramides (N-acylsphing-4-enines) as substrates, it also exhibits activity toward dihydrosphingosine-containing CERs (N-acylsphinganines) and produces 14Z-SPH-containing sphingolipids. Its desaturase mechanism involves an electron transfer facilitated by cytochrome b5. FADS3 also acts as a methyl-end fatty acyl coenzyme A (CoA) desaturase that introduces a cis double bond between the preexisting double bond and the terminal methyl group of the fatty acyl chain. Desaturates (11E)-octadecenoate (trans-vaccenoate, the predominant trans fatty acid in human milk) at carbon 13 to generate (11E,13Z)-octadecadienoate (also known as conjugated linoleic acid 11E,13Z-CLA). In Bos taurus (Bovine), this protein is Fatty acid desaturase 3.